Here is a 249-residue protein sequence, read N- to C-terminus: 2,3-bisphosphoglycerate-dependent phosphoglycerate mutase (249 aa).

Substrate-binding positions include R9–N16, T22–G23, R61, E88–Y91, K99, R115–R116, and G184–N185. H10 serves as the catalytic Tele-phosphohistidine intermediate. Residue E88 is the Proton donor/acceptor of the active site.

This sequence belongs to the phosphoglycerate mutase family. BPG-dependent PGAM subfamily. As to quaternary structure, homodimer.

The catalysed reaction is (2R)-2-phosphoglycerate = (2R)-3-phosphoglycerate. Its pathway is carbohydrate degradation; glycolysis; pyruvate from D-glyceraldehyde 3-phosphate: step 3/5. Functionally, catalyzes the interconversion of 2-phosphoglycerate and 3-phosphoglycerate. This chain is 2,3-bisphosphoglycerate-dependent phosphoglycerate mutase, found in Stenotrophomonas maltophilia (strain K279a).